The primary structure comprises 564 residues: Adenine deaminase (564 aa).

The protein belongs to the metallo-dependent hydrolases superfamily. Adenine deaminase family. Mn(2+) serves as cofactor.

The enzyme catalyses adenine + H2O + H(+) = hypoxanthine + NH4(+). The chain is Adenine deaminase from Methylobacterium sp. (strain 4-46).